The sequence spans 807 residues: Carbamoyltransferase HypF2 (807 aa).

The 88-residue stretch at Arg-14–Glu-101 folds into the Acylphosphatase-like domain. 2 consecutive C4-type zinc fingers follow at residues Cys-120–Cys-145 and Cys-170–Cys-195. The region spanning Val-212 to Gly-415 is the YrdC-like domain. Residues Trp-663–Val-682 form a disordered region.

The protein belongs to the carbamoyltransferase HypF family.

It catalyses the reaction C-terminal L-cysteinyl-[HypE protein] + carbamoyl phosphate + ATP + H2O = C-terminal S-carboxamide-L-cysteinyl-[HypE protein] + AMP + phosphate + diphosphate + H(+). Its pathway is protein modification; [NiFe] hydrogenase maturation. Functionally, involved in the maturation of [NiFe] hydrogenases. Along with HypE, it catalyzes the synthesis of the CN ligands of the active site iron of [NiFe]-hydrogenases. HypF functions as a carbamoyl transferase using carbamoylphosphate as a substrate and transferring the carboxamido moiety in an ATP-dependent reaction to the thiolate of the C-terminal cysteine of HypE yielding a protein-S-carboxamide. In Cupriavidus necator (strain ATCC 17699 / DSM 428 / KCTC 22496 / NCIMB 10442 / H16 / Stanier 337) (Ralstonia eutropha), this protein is Carbamoyltransferase HypF2 (hypF2).